The following is an 896-amino-acid chain: Lipoxygenase 2, chloroplastic (896 aa).

The transit peptide at 1-56 (MYCRESLSSLQTLNVAKSLSSLFPKQSALINPISAGRRNNLPRPNLRRRCKVTASR) directs the protein to the chloroplast. The PLAT domain maps to 79–199 (ITAQEEFLEG…VDPTKRIFFS (121 aa)). Residues 175–232 (GSITFTCESWVAPKSVDPTKRIFFSDKSYLPSQTPEPLKKYRKEELETLQGKNREEVG) are EIF4E2 binding. The Lipoxygenase domain maps to 202–896 (SYLPSQTPEP…GMGVPYSISI (695 aa)). Fe cation contacts are provided by His-554, His-559, His-746, Asn-750, and Ile-896.

It belongs to the lipoxygenase family. In terms of assembly, interacts with EIF4E2. Requires Fe cation as cofactor. In terms of tissue distribution, in leaves and inflorescences but not abundant in seeds, roots and stems.

The protein resides in the plastid. The protein localises to the chloroplast. Its subcellular location is the cytoplasm. It catalyses the reaction (9Z,12Z)-octadecadienoate + O2 = (13S)-hydroperoxy-(9Z,11E)-octadecadienoate. The catalysed reaction is (9Z,12Z,15Z)-octadecatrienoate + O2 = (13S)-hydroperoxy-(9Z,11E,15Z)-octadecatrienoate. It participates in lipid metabolism; oxylipin biosynthesis. Its function is as follows. 13S-lipoxygenase that can use linolenic acid as substrates. Plant lipoxygenases may be involved in a number of diverse aspects of plant physiology including growth and development, pest resistance, and senescence or responses to wounding. Catalyzes the hydroperoxidation of lipids containing a cis,cis-1,4-pentadiene structure. Required for the wound-induced synthesis of jasmonic acid (JA) in leaves. The sequence is that of Lipoxygenase 2, chloroplastic (LOX2) from Arabidopsis thaliana (Mouse-ear cress).